Consider the following 921-residue polypeptide: Glutamate receptor 3.7 (921 aa).

Residues 1-25 (MGLGIDPSVAITALIVVILVVPMDC) form the signal peptide. The Extracellular segment spans residues 26–580 (QRPQLVNIGA…WIFLRPFTSR (555 aa)). 7 N-linked (GlcNAc...) asparagine glycosylation sites follow: asparagine 214, asparagine 300, asparagine 330, asparagine 369, asparagine 396, asparagine 478, and asparagine 568. A helical membrane pass occupies residues 581-601 (LWCVVLVSFLVIAVVIWILEH). Residues 602–608 (RINEDFR) are Cytoplasmic-facing. The helical transmembrane segment at 609 to 629 (GPPRRQLSTMLLFSFSTLFKR) threads the bilayer. The Cytoplasmic segment spans residues 630–640 (NQEDTISNLAR). Residues 641–661 (LVMIVWLFLLMVLTASYTANL) traverse the membrane as a helical segment. At 662 to 822 (TSILTVQQLP…PEPNQLHLKS (161 aa)) the chain is on the extracellular side. Residues 823–843 (FKGLYLVCIAITVSAFLVFVL) traverse the membrane as a helical segment. Over 844–921 (RMIRQFVRYR…VQADTEVPRN (78 aa)) the chain is Cytoplasmic. A disordered region spans residues 896 to 921 (FRRSDDSNNNPSHVGEVQADTEVPRN).

The protein belongs to the glutamate-gated ion channel (TC 1.A.10.1) family. In terms of assembly, may form heteromers. Expressed predominantly in leaves and siliques. Also detected in roots.

Its subcellular location is the membrane. In terms of biological role, glutamate-gated receptor that probably acts as a non-selective cation channel. May be involved in light-signal transduction and calcium homeostasis via the regulation of calcium influx into cells. The protein is Glutamate receptor 3.7 (GLR3.7) of Arabidopsis thaliana (Mouse-ear cress).